The sequence spans 105 residues: Large ribosomal subunit protein uL24 (105 aa).

Belongs to the universal ribosomal protein uL24 family. Part of the 50S ribosomal subunit.

Its function is as follows. One of two assembly initiator proteins, it binds directly to the 5'-end of the 23S rRNA, where it nucleates assembly of the 50S subunit. In terms of biological role, one of the proteins that surrounds the polypeptide exit tunnel on the outside of the subunit. The sequence is that of Large ribosomal subunit protein uL24 from Xylella fastidiosa (strain 9a5c).